Consider the following 484-residue polypeptide: MAKRLLLTAALAATTLAAPVIEERQNCGSVWSQCGGQGWTGATCCASGSTCVAQNQWYSQCLPGSQVTTTAQAPSSTRTTTSSSSRPTSSSISTSAVNVPTTTTSAGASVTVPPGGGASSTASYSGNPFLGVQQWANSYYSSEVHTLAIPSLTGPMATKAAAVAKVPSFQWMDRNVTVDTLFSGTLADIRAANRAGANPPYAGIFVVYDLPDRDCAAAASNGEWAIADGGAAKYKAYIDRIRHHLVQYSDIRTILVIEPDSLANMVTNMNVPKCQGAANTYKELTVYALKQLNLPNVAMYLDAGHAGWLGWPANIGPAAELFAGIYKDAGRPTSLRGLATNVANYNGWSLSSAPSYTTPNPNFDEKRFVQAFSPLLTAAGFPAHFITDTGRSGKQPTGQLEWGHWCNAIGTGFGPRPTTDTGLDIEDAFVWIKPGGECDGTSDTTAARYDHHCGFADALKPAPEAGQWFQAYFEQLLTNANPPF.

The N-terminal stretch at 1-17 (MAKRLLLTAALAATTLA) is a signal peptide. One can recognise a CBM1 domain in the interval 26–62 (NCGSVWSQCGGQGWTGATCCASGSTCVAQNQWYSQCL). Intrachain disulfides connect cysteine 34–cysteine 51 and cysteine 45–cysteine 61. The disordered stretch occupies residues 68–98 (TTTAQAPSSTRTTTSSSSRPTSSSISTSAVN). Substrate contacts are provided by tryptophan 171 and aspartate 173. Asparagine 175 carries N-linked (GlcNAc...) asparagine glycosylation. Positions 208–230 (YDLPDRDCAAAASNGEWAIADGG) are substrate binding loop 1. Aspartate 260 acts as the Proton donor in catalysis. Residues histidine 305, tryptophan 308, asparagine 344, tryptophan 405, lysine 433, and glutamate 437 each coordinate substrate. A substrate binding loop 2 region spans residues 431–469 (WIKPGGECDGTSDTTAARYDHHCGFADALKPAPEAGQWF). Aspartate 439 functions as the Proton acceptor in the catalytic mechanism.

It belongs to the glycosyl hydrolase 6 (cellulase B) family. As to quaternary structure, monomer. Post-translationally, both N- and O-glycosylated.

The protein localises to the secreted. It carries out the reaction Hydrolysis of (1-&gt;4)-beta-D-glucosidic linkages in cellulose and cellotetraose, releasing cellobiose from the non-reducing ends of the chains.. Exoglucanase that plays an important function in biomass degradation by catalyzing the hydrolysis of the non-reducing end beta-1,4-glucosidic linkages in cellulose and cellotetraose to release cellobiose. Hydrolyzes crystalline and amorphous cellulose but is inactive on hydroxyethyl cellulose, mannan, galactomannan, xyloglucan, arabinoxylan, arabinan, xylan, and pectin. This chain is 1,4-beta-D-glucan cellobiohydrolase CEL6A, found in Podospora anserina (strain S / ATCC MYA-4624 / DSM 980 / FGSC 10383) (Pleurage anserina).